A 588-amino-acid polypeptide reads, in one-letter code: Phosphatidylinositol-3,5-bisphosphate 3-phosphatase mtm-1 (588 aa).

The 72-residue stretch at 20–91 (IQESIDLKLL…GQVSRIEKVG (72 aa)) folds into the GRAM domain. Residues 164–543 (GWKIYSAEKE…CGLHVWIDYY (380 aa)) enclose the Myotubularin phosphatase domain. The a 1,2-diacyl-sn-glycero-3-phospho-(1D-myo-inositol-3,5-bisphosphate) site is built by Asn-293, Asn-316, and Ile-317. The a 1,2-diacyl-sn-glycero-3-phospho-(1D-myo-inositol-3-phosphate) site is built by Asn-293, Asn-316, and Ile-317. Cys-378 (phosphocysteine intermediate) is an active-site residue. The a 1,2-diacyl-sn-glycero-3-phospho-(1D-myo-inositol-3,5-bisphosphate) site is built by Ser-379, Asp-380, Gly-381, Trp-382, Asp-383, Arg-384, Lys-420, and Arg-424. Residues Ser-379, Asp-380, Gly-381, Trp-382, Asp-383, and Arg-384 each coordinate a 1,2-diacyl-sn-glycero-3-phospho-(1D-myo-inositol-3-phosphate). Ser-379 lines the phosphate pocket. The phosphate site is built by Gly-381, Trp-382, Asp-383, and Arg-384. Arg-424 serves as a coordination point for a 1,2-diacyl-sn-glycero-3-phospho-(1D-myo-inositol-3-phosphate). Positions 563 to 588 (AQFVDEKKQLLDEIMALDDAAQKLTA) form a coiled coil.

It belongs to the protein-tyrosine phosphatase family. Non-receptor class myotubularin subfamily. In terms of tissue distribution, expressed in embryo, larva and in adults. Expressed in a few head and tail neurons. Expressed in hypodermis, body wall and pharyngeal muscles, sheath cells, vulva, distal tip cells and coelomocytes.

Its subcellular location is the cell membrane. The protein resides in the cell projection. It is found in the phagocytic cup. The protein localises to the apical cell membrane. It localises to the cytoplasmic granule membrane. The enzyme catalyses a 1,2-diacyl-sn-glycero-3-phospho-(1D-myo-inositol-3,5-bisphosphate) + H2O = a 1,2-diacyl-sn-glycero-3-phospho-(1D-myo-inositol-5-phosphate) + phosphate. It carries out the reaction a 1,2-diacyl-sn-glycero-3-phospho-(1D-myo-inositol-3-phosphate) + H2O = a 1,2-diacyl-sn-glycero-3-phospho-(1D-myo-inositol) + phosphate. The catalysed reaction is 1,2-dioctanoyl-sn-glycero-3-phospho-(1-D-myo-inositol-3-phosphate) + H2O = 1,2-dioctanoyl-sn-glycero-3-phospho-(1D-myo-inositol) + phosphate. Lipid phosphatase that specifically dephosphorylates phosphatidylinositol 3-phosphate (PI3P) and phosphatidylinositol 3,5-bisphosphate (PI(3,5)P2). Negatively regulates accumulation of PI3P on intracellular vesicles. Negatively regulates phagocytosis of apoptotic cells probably by limiting the recruitment and/or the activation of ced-5, ced-2 and ced-12 complex. In addition, may positively regulate phagosome maturation by promoting recycling of apoptotic receptor ced-1 back to the plasma membrane. Essential for embryonic and larval development. May promote migration of distal tip cells. This chain is Phosphatidylinositol-3,5-bisphosphate 3-phosphatase mtm-1, found in Caenorhabditis elegans.